The sequence spans 63 residues: UPF0337 protein RA1131 (63 aa).

The segment at 1 to 63 (MGSAKDKVAG…DAVKGAVDKT (63 aa)) is disordered. Positions 34 to 49 (AKGAAQEAKGGAQQAK) are enriched in low complexity. Residues 51–63 (KLKDAVKGAVDKT) show a composition bias toward basic and acidic residues.

The protein belongs to the UPF0337 (CsbD) family.

This Rhizobium meliloti (strain 1021) (Ensifer meliloti) protein is UPF0337 protein RA1131.